Reading from the N-terminus, the 281-residue chain is NAC domain-containing protein 6 (281 aa).

Positions 4 to 156 (LPVGSRFCPT…QDALTGFADQ (153 aa)) constitute an NAC domain. Disordered regions lie at residues 84 to 109 (GGSE…QKGD) and 211 to 249 (LEGH…VTQE). A compositionally biased stretch (basic and acidic residues) spans 94 to 109 (NDGKKEIKDGHMQKGD). The DNA-binding element occupies 109–162 (DGLRASDDLQKVVLCRIRYKKEANVNEFGLVNHQAHQTQDALTGFADQLEMMLE). Residues 229–239 (QQQQQQQQQQQ) are compositionally biased toward low complexity.

Its subcellular location is the nucleus. This chain is NAC domain-containing protein 6 (NAC006), found in Arabidopsis thaliana (Mouse-ear cress).